The following is a 153-amino-acid chain: Aspartate carbamoyltransferase regulatory chain (153 aa).

Positions 109, 114, 138, and 141 each coordinate Zn(2+).

It belongs to the PyrI family. In terms of assembly, contains catalytic and regulatory chains. Zn(2+) serves as cofactor.

Involved in allosteric regulation of aspartate carbamoyltransferase. The polypeptide is Aspartate carbamoyltransferase regulatory chain (Vibrio vulnificus (strain YJ016)).